A 95-amino-acid chain; its full sequence is Small ribosomal subunit protein mS37 (95 aa).

The region spanning 27-69 is the CHCH domain; the sequence is ANRCLVLMSNLLQCWSSNGHMNPVCEKLATDLKACTSQNVMGS. Short sequence motifs (cx9C motif) lie at residues 30-40 and 51-61; these read CLVLMSNLLQC and CEKLATDLKAC. Disulfide bonds link cysteine 30–cysteine 61 and cysteine 40–cysteine 51.

This sequence belongs to the mitochondrion-specific ribosomal protein mS37 family. In terms of assembly, component of the mitochondrial small ribosomal subunit.

It localises to the mitochondrion. Its function is as follows. Involved in mitochondrial genome encoded proteins translation. This chain is Small ribosomal subunit protein mS37 (MRP10), found in Eremothecium gossypii (strain ATCC 10895 / CBS 109.51 / FGSC 9923 / NRRL Y-1056) (Yeast).